Reading from the N-terminus, the 118-residue chain is Large ribosomal subunit protein bL20 (118 aa).

It belongs to the bacterial ribosomal protein bL20 family.

Its function is as follows. Binds directly to 23S ribosomal RNA and is necessary for the in vitro assembly process of the 50S ribosomal subunit. It is not involved in the protein synthesizing functions of that subunit. In Francisella tularensis subsp. tularensis (strain FSC 198), this protein is Large ribosomal subunit protein bL20.